We begin with the raw amino-acid sequence, 578 residues long: Proline--tRNA ligase (578 aa).

Belongs to the class-II aminoacyl-tRNA synthetase family. ProS type 1 subfamily. Homodimer.

The protein resides in the cytoplasm. The enzyme catalyses tRNA(Pro) + L-proline + ATP = L-prolyl-tRNA(Pro) + AMP + diphosphate. Functionally, catalyzes the attachment of proline to tRNA(Pro) in a two-step reaction: proline is first activated by ATP to form Pro-AMP and then transferred to the acceptor end of tRNA(Pro). As ProRS can inadvertently accommodate and process non-cognate amino acids such as alanine and cysteine, to avoid such errors it has two additional distinct editing activities against alanine. One activity is designated as 'pretransfer' editing and involves the tRNA(Pro)-independent hydrolysis of activated Ala-AMP. The other activity is designated 'posttransfer' editing and involves deacylation of mischarged Ala-tRNA(Pro). The misacylated Cys-tRNA(Pro) is not edited by ProRS. The chain is Proline--tRNA ligase from Syntrophus aciditrophicus (strain SB).